The sequence spans 147 residues: uncharacterized protein (147 aa).

The tract at residues 51–72 is disordered; the sequence is VTSSMSVMNDSEECPLINGPSM.

This is an uncharacterized protein from Gallid herpesvirus 2 (strain GA) (GaHV-2).